Consider the following 256-residue polypeptide: Probable aquaporin TIP5-1 (256 aa).

Methionine 1 is subject to N-acetylmethionine. Helical transmembrane passes span 24-44, 57-77, 89-109, 144-164, and 171-191; these read CYVS…GSVM, PFGV…SVYI, AVTF…MFYW, FGAS…VFTA, and LPLA…VLAA. The NPA 1 motif lies at 87–89; it reads NPA. The short motif at 200-202 is the NPA 2 element; that stretch reads NPA. A helical membrane pass occupies residues 222-242; it reads VGPLLGGATAALVYDNVVVPV. Position 249 is a phosphoserine (serine 249).

The protein belongs to the MIP/aquaporin (TC 1.A.8) family. TIP (TC 1.A.8.10) subfamily.

It is found in the membrane. Its function is as follows. Potential aquaporin, which may facilitate the transport of water and small neutral solutes across cell membranes. This chain is Probable aquaporin TIP5-1 (TIP5-1), found in Arabidopsis thaliana (Mouse-ear cress).